The primary structure comprises 425 residues: Serine hydroxymethyltransferase (425 aa).

(6S)-5,6,7,8-tetrahydrofolate is bound by residues Leu124 and 128-130 (GHL). Lys233 bears the N6-(pyridoxal phosphate)lysine mark.

This sequence belongs to the SHMT family. Homodimer. Requires pyridoxal 5'-phosphate as cofactor.

Its subcellular location is the cytoplasm. The catalysed reaction is (6R)-5,10-methylene-5,6,7,8-tetrahydrofolate + glycine + H2O = (6S)-5,6,7,8-tetrahydrofolate + L-serine. It functions in the pathway one-carbon metabolism; tetrahydrofolate interconversion. It participates in amino-acid biosynthesis; glycine biosynthesis; glycine from L-serine: step 1/1. Functionally, catalyzes the reversible interconversion of serine and glycine with tetrahydrofolate (THF) serving as the one-carbon carrier. This reaction serves as the major source of one-carbon groups required for the biosynthesis of purines, thymidylate, methionine, and other important biomolecules. Also exhibits THF-independent aldolase activity toward beta-hydroxyamino acids, producing glycine and aldehydes, via a retro-aldol mechanism. This Clavibacter sepedonicus (Clavibacter michiganensis subsp. sepedonicus) protein is Serine hydroxymethyltransferase.